The primary structure comprises 131 residues: Small ribosomal subunit protein uS11 (131 aa).

The protein belongs to the universal ribosomal protein uS11 family. Part of the 30S ribosomal subunit. Interacts with proteins S7 and S18. Binds to IF-3.

Located on the platform of the 30S subunit, it bridges several disparate RNA helices of the 16S rRNA. Forms part of the Shine-Dalgarno cleft in the 70S ribosome. This is Small ribosomal subunit protein uS11 from Dictyoglomus turgidum (strain DSM 6724 / Z-1310).